Here is a 405-residue protein sequence, read N- to C-terminus: Corticosteroid-binding globulin (405 aa).

A signal peptide spans 1 to 22; it reads MPLLLYTCLLWLPTSGLWTVQA. N-linked (GlcNAc...) asparagine glycosylation is found at Asn-31, Asn-96, and Asn-176. Gln-254 provides a ligand contact to cortisol. A glycan (N-linked (GlcNAc...) asparagine) is linked at Asn-260. Residue Asn-286 coordinates cortisol. N-linked (GlcNAc...) asparagine glycans are attached at residues Asn-330 and Asn-369. The cortisol site is built by His-390 and Trp-393.

This sequence belongs to the serpin family. In terms of processing, N-glycosylated; binds 5 oligosaccharide chains. Post-translationally, glycosylation in position Asn-260 is needed for steroid binding. In terms of tissue distribution, plasma; synthesized in liver. Has also been identified in a number of glycocorticoid responsive cells.

The protein localises to the secreted. Functionally, major transport protein for glucocorticoids and progestins in the blood of almost all vertebrate species. In Homo sapiens (Human), this protein is Corticosteroid-binding globulin (SERPINA6).